We begin with the raw amino-acid sequence, 386 residues long: 2-isopropylmalate synthase (386 aa).

Residues 12–265 enclose the Pyruvate carboxyltransferase domain; the sequence is VRIFDTTLRD…DVGVRTYLLY (254 aa). Positions 21, 203, 205, and 239 each coordinate a divalent metal cation.

Belongs to the alpha-IPM synthase/homocitrate synthase family. As to quaternary structure, homodimer. The cofactor is a divalent metal cation.

It carries out the reaction 3-methyl-2-oxobutanoate + acetyl-CoA + H2O = (2S)-2-isopropylmalate + CoA + H(+). It functions in the pathway amino-acid biosynthesis; L-leucine biosynthesis; L-leucine from 3-methyl-2-oxobutanoate: step 1/4. Its activity is regulated as follows. Is not inhibited by leucine. Catalyzes the condensation of the acetyl group of acetyl-CoA with 3-methyl-2-oxobutanoate (2-oxoisovalerate) to form 3-carboxy-3-hydroxy-4-methylpentanoate (2-isopropylmalate). Carries out the first step of the leucine biosynthesis pathway. Also displays a low citramalate synthase activity, using pyruvate as substrate, but is unable to use 2-oxoglutarate. This is 2-isopropylmalate synthase from Sulfolobus acidocaldarius (strain ATCC 33909 / DSM 639 / JCM 8929 / NBRC 15157 / NCIMB 11770).